Here is a 663-residue protein sequence, read N- to C-terminus: Polyunsaturated fatty acid lipoxygenase ALOX15 (663 aa).

The PLAT domain occupies 2–115; sequence GVYRIRVSTG…ILNLPEGTGC (114 aa). Residues 116 to 663 form the Lipoxygenase domain; that stretch reads TVVEDSQGLF…PSLVENSVAI (548 aa). Positions 361, 366, 541, 545, and 663 each coordinate Fe cation.

It belongs to the lipoxygenase family. Interacts with PEBP1; in response to IL13/interleukin-13, prevents the interaction of PEBP1 with RAF1 to activate the ERK signaling cascade. Fe cation serves as cofactor. As to expression, found in pituitary and pineal glands as well as leukocytes, kidney, aorta, small intestine and cornea. Also expressed by resident peritoneal macrophages (at protein level).

It localises to the cytoplasm. Its subcellular location is the cytosol. The protein resides in the cell membrane. The protein localises to the lipid droplet. The catalysed reaction is (5Z,8Z,11Z,14Z)-eicosatetraenoate + O2 = (12S)-hydroperoxy-(5Z,8Z,10E,14Z)-eicosatetraenoate. It catalyses the reaction (5Z,8Z,11Z,14Z)-eicosatetraenoate + O2 = (15S)-hydroperoxy-(5Z,8Z,11Z,13E)-eicosatetraenoate. The enzyme catalyses (9Z,12Z)-octadecadienoate + O2 = (13S)-hydroperoxy-(9Z,11E)-octadecadienoate. It carries out the reaction (5Z,8Z,11Z,14Z)-eicosatetraenoate + 2 O2 = (14R,15S)-dihydroperoxy-(5Z,8Z,10E,12E)-eicosatetraenoate. The catalysed reaction is (5Z,8Z,11Z,14Z)-eicosatetraenoate + 2 O2 = (8S,15S)-dihydroperoxy-(5Z,9E,11Z,13E)-eicosatetraenoate. It catalyses the reaction (14S,15R)-epoxy-(5Z,8Z,11Z)-eicosatrienoate + O2 = (8S)-hydroperoxy-(14S,15R)-epoxy-(5Z,9E,11Z)-eicosatrienoate. The enzyme catalyses (14S,15R)-epoxy-(5Z,8Z,11Z)-eicosatrienoate + O2 = (12S)-hydroperoxy-(14S,15R)-epoxy-(5Z,8Z,10E)-eicosatrienoate. It carries out the reaction (14R,15S)-epoxy-(5Z,8Z,11Z)-eicosatrienoate + O2 = (5S)-hydroperoxy-(14R,15S)-epoxy-(6E,8Z,11Z)-eicosatrienoate. The catalysed reaction is (14R,15S)-epoxy-(5Z,8Z,11Z)-eicosatrienoate + O2 = (12S)-hydroperoxy-(14R,15S)-epoxy-(5Z,8Z,10E)-eicosatrienoate. It catalyses the reaction (15R)-hydroperoxy-(5Z,8Z,11Z,13E)-eicosatetraenoate = 15-oxo-(5Z,8Z,11Z,13E)-eicosatetraenoate + H2O. The enzyme catalyses (15S)-hydroperoxy-(5Z,8Z,11Z,13E)-eicosatetraenoate = (14S,15S)-epoxy-(5Z,8Z,10E,12E)-eicosatetraenoate + H2O. It carries out the reaction (12S)-hydroperoxy-(5Z,8Z,10E,14Z)-eicosatetraenoate = (8S)-hydroxy-(11S,12S)-epoxy-(5Z,9E,14Z)-eicosatrienoate. The catalysed reaction is (4Z,7Z,10Z,13Z,16Z)-docosapentaenoate + O2 = 14-hydroperoxy-(4Z,7Z,10Z,12E,16Z)-docosapentaenoate. It catalyses the reaction (7Z,10Z,13Z,16Z,19Z)-docosapentaenoate + O2 = 14-hydroperoxy-(7Z,10Z,12E,16Z,19Z)-docosapentaenoate. The enzyme catalyses (4Z,7Z,10Z,13Z,16Z,19Z)-docosahexaenoate + O2 = (14S)-hydroperoxy-(4Z,7Z,10Z,12E,16Z,19Z)-docosahexaenoate. It carries out the reaction (4Z,7Z,10Z,13Z,16Z,19Z)-docosahexaenoate + O2 = (17S)-hydroperoxy-(4Z,7Z,10Z,13Z,15E,19Z)-docosahexaenoate. The catalysed reaction is (7S)-hydroperoxy-(4Z,8E,10Z,13Z,16Z,19Z)-docosahexaenoate + O2 = (7S,14S)-dihydroperoxy-(4Z,8E,10Z,12E,16Z,19Z)-docosahexaenoate. It catalyses the reaction (7S)-hydroperoxy-(4Z,8E,10Z,13Z,16Z,19Z)-docosahexaenoate + O2 = (7S,17S)-dihydroperoxy-(4Z,8E,10Z,13Z,15E,19Z)-docosahexaenoate. The enzyme catalyses (4Z,7Z,10Z,13Z,16Z,19Z)-docosahexaenoate + O2 = (11S)-hydroperoxy-(4Z,7Z,9E,13Z,16Z,19Z)-docosahexaenoate. It carries out the reaction N-(5Z,8Z,11Z,14Z)-eicosatetraenoyl-taurine + O2 = N-(12S)-hydroperoxy-(5Z,8Z,10E,14Z)-eicosatetraenoyl-taurine. The catalysed reaction is N-(5Z,8Z,11Z,14Z)-eicosatetraenoyl-gamma-aminobutanoate + O2 = N-(12S)-hydroperoxy-(5Z,8Z,10E,14Z)-eicosatetraenoyl-gamma-aminobutanoate. It catalyses the reaction N-(5Z,8Z,11Z,14Z)-eicosatetraenoyl-glycine + O2 = N-(12S)-hydroperoxy-(5Z,8Z,10E,14Z)-eicosatetraenoyl-glycine. The enzyme catalyses N-(5Z,8Z,11Z,14Z)-eicosatetraenoyl-L-alanine + O2 = N-(12S)-hydroperoxy-(5Z,8Z,10E,14Z)-eicosatetraenoyl-alanine. It carries out the reaction N-(5Z,8Z,11Z,14Z)-eicosatetraenoyl-taurine + O2 = N-(15S)-hydroperoxy-(5Z,8Z,11Z,13E)-eicosatetraenoyl-taurine. The catalysed reaction is N-(5Z,8Z,11Z,14Z)-eicosatetraenoyl-gamma-aminobutanoate + O2 = N-(15S)-hydroperoxy-(5Z,8Z,11Z,13E)-eicosatetraenoyl-gamma-aminobutanoate. It catalyses the reaction N-(5Z,8Z,11Z,14Z)-eicosatetraenoyl-glycine + O2 = N-(15S)-hydroperoxy-(5Z,8Z,11Z,13E)-eicosatetraenoyl-glycine. The enzyme catalyses N-(5Z,8Z,11Z,14Z)-eicosatetraenoyl-L-alanine + O2 = N-(15S)-hydroperoxy-(5Z,8Z,11Z,13E)-eicosatetraenoyl-alanine. It functions in the pathway lipid metabolism; hydroperoxy eicosatetraenoic acid biosynthesis. Non-heme iron-containing dioxygenase that catalyzes the stereo-specific peroxidation of free and esterified polyunsaturated fatty acids generating a spectrum of bioactive lipid mediators. It inserts peroxyl groups at C12 or C15 of arachidonate ((5Z,8Z,11Z,14Z)-eicosatetraenoate) producing both 12-hydroperoxyeicosatetraenoate/12-HPETE and 15-hydroperoxyeicosatetraenoate/15-HPETE. It may then act on 12-HPETE to produce hepoxilins, which may show pro-inflammatory properties. Can also peroxidize linoleate ((9Z,12Z)-octadecadienoate) to 13-hydroperoxyoctadecadienoate. May participate in the sequential oxidations of DHA ((4Z,7Z,10Z,13Z,16Z,19Z)-docosahexaenoate) to generate specialized pro-resolving mediators (SPMs)like resolvin D5 ((7S,17S)-diHPDHA) and (7S,14S)-diHPDHA, that actively down-regulate the immune response and have anti-aggregation properties with platelets. Can convert epoxy fatty acids to hydroperoxy-epoxides derivatives followed by an intramolecular nucleophilic substitution leading to the formation of monocyclic endoperoxides. Plays an important role during the maintenance of self-tolerance by peroxidizing membrane-bound phosphatidylethanolamine which can then signal the sorting process for clearance of apoptotic cells during inflammation and prevent an autoimmune response. In addition to its role in the immune and inflammatory responses, this enzyme may play a role in epithelial wound healing in the cornea through production of lipoxin A4 (LXA(4)) and docosahexaenoic acid-derived neuroprotectin D1 (NPD1; 10R,17S-HDHA), both lipid autacoids exhibit anti-inflammatory and neuroprotective properties. Furthermore, it may regulate actin polymerization which is crucial for several biological processes such as the phagocytosis of apoptotic cells. It is also implicated in the generation of endogenous ligands for peroxisome proliferator activated receptor (PPAR-gamma), hence modulating macrophage development and function. It may also exert a negative effect on skeletal development by regulating bone mass through this pathway. As well as participates in ER stress and downstream inflammation in adipocytes, pancreatic islets, and liver. Finally, it is also involved in the cellular response to IL13/interleukin-13. The sequence is that of Polyunsaturated fatty acid lipoxygenase ALOX15 from Mus musculus (Mouse).